The following is a 248-amino-acid chain: MSFVVIIPARYASTRLPGKPLVDINGKPMIVHVLERARESGADRIIVATDHEDVARAVEAAGGEVCMTRADHQSGTERLAEVVEKCAFSDDTVIVNVQGDEPMIPATIIRQVADNLAQRQVGMATLAVPIHNAEEAFNPNAVKVVLDAEGYALYFSRATIPWERDRFAKGLETVGDNFLRHLGIYGYRAGFIRRYVTWQPSPLEHIEMLEQLRVLWYGEKIHVAVAHEVPGTGVDTPEDLERVRAEMR.

Belongs to the KdsB family.

It localises to the cytoplasm. The enzyme catalyses 3-deoxy-alpha-D-manno-oct-2-ulosonate + CTP = CMP-3-deoxy-beta-D-manno-octulosonate + diphosphate. Its pathway is nucleotide-sugar biosynthesis; CMP-3-deoxy-D-manno-octulosonate biosynthesis; CMP-3-deoxy-D-manno-octulosonate from 3-deoxy-D-manno-octulosonate and CTP: step 1/1. The protein operates within bacterial outer membrane biogenesis; lipopolysaccharide biosynthesis. In terms of biological role, activates KDO (a required 8-carbon sugar) for incorporation into bacterial lipopolysaccharide in Gram-negative bacteria. This chain is 3-deoxy-manno-octulosonate cytidylyltransferase, found in Shigella dysenteriae serotype 1 (strain Sd197).